The chain runs to 81 residues: MNSTSTIIEFTGEFWTYFTLVFMMLTIGFFFIVTSLVAAILNKLCDLNDHHTNSLDIRTKLRSDTQLITRAHEESINQSSN.

At 1-19 the chain is on the intravirion side; the sequence is MNSTSTIIEFTGEFWTYFT. A helical; Signal-anchor for type II membrane protein transmembrane segment spans residues 20–40; it reads LVFMMLTIGFFFIVTSLVAAI. Topologically, residues 41 to 81 are virion surface; that stretch reads LNKLCDLNDHHTNSLDIRTKLRSDTQLITRAHEESINQSSN. The N-linked (GlcNAc...) asparagine; by host glycan is linked to Asn77.

Belongs to the orthopneumovirus small hydrophobic protein family. In terms of assembly, homopentamer forming a funnel-like pore. Interacts with glycoprotein G; this interaction occurs on the surface of virion particles and infected cells. Interacts with host BCAP31 (via C-terminus); this interaction is direct. Four species of SH have been detected in infected cell cytoplasm: a 7.5 kDa non-glycosylated form (SH0), a 13-15 kDa form that contains one or two N-linked carbohydrate side chains of the high-mannose type (SHg), a 21-30 kDa polylactosaminoglycan-modified form of the protein (SHp), and the isoform generated by alternative translational initiation. Of these different forms, SH0 is by far the most abundant protein detected during virus infection. In terms of processing, tyrosine phosphorylated.

It localises to the virion membrane. The protein localises to the host cell membrane. It is found in the host Golgi apparatus membrane. The protein resides in the host endoplasmic reticulum membrane. Channel activity is inhibited by copper. Also inhibited by small-molecule pyronin B. In terms of biological role, viroporin that forms a homopentameric ion channel displaying low ion selectivity. May play a role in virus morphogenesis and pathogenicity at various stages of the viral life cycle. Accumulates at the membrane of the Golgi apparatus in infected cells and may facilitate virus release by modifying the secretory pathway. May enhance host membrane permeability and disrupt cellular ion homeostasis, which can be sensed as damage-associated molecular patterns/danger signals, triggering NLRP3 inflammasome activation and inflammatory immune response. Also inhibits host TNFA-mediated signaling pathway and may delay apoptosis, allowing time for the virus to replicate. This is Small hydrophobic protein (SH) from Bos taurus (Bovine).